The chain runs to 167 residues: Putative C-type lectin-like domain family 1 (167 aa).

Residues methionine 1–serine 67 are Cytoplasmic-facing. A helical; Signal-anchor for type II membrane protein transmembrane segment spans residues phenylalanine 68–isoleucine 88. At lysine 89–isoleucine 167 the chain is on the extracellular side. N-linked (GlcNAc...) asparagine glycosylation is found at asparagine 109, asparagine 140, and asparagine 149. The C-type lectin; atypical domain maps to serine 116–isoleucine 167.

In terms of tissue distribution, expressed in spleen, lymph node, and tonsil. Lower expression in peripheral blood, bone marrow, and colon. No expression detected in thymus. Highly expressed in dendritic and B-cells.

It is found in the cell membrane. In terms of biological role, may function in mediating immune cell-cell interactions. May act as a T-cell costimulatory molecule, enhancing anti-CD3-induced proliferation. May play a role in the interaction of dendritic cells with T-cells and the cells of the adaptive immune response. In Homo sapiens (Human), this protein is Putative C-type lectin-like domain family 1.